A 217-amino-acid chain; its full sequence is Glycine betaine/carnitine/choline transport system permease protein OpuCB (217 aa).

Residues 19 to 198 (TGEHLYISLI…ILAIIIDYVL (180 aa)) form the ABC transmembrane type-1 domain. 6 helical membrane passes run 23 to 43 (LYIS…LGVA), 52 to 74 (GAVI…AFFI), 84 to 101 (AIVA…RNTY), 128 to 148 (LVEI…STIY), 150 to 170 (IGWA…YIFI), and 180 to 200 (IIGG…VLAV).

This sequence belongs to the binding-protein-dependent transport system permease family. CysTW subfamily. The complex is composed of two ATP-binding proteins (OpuCA), two transmembrane proteins (OpuCB and OpuCD) and a solute-binding protein (OpuCC).

The protein resides in the cell membrane. In terms of biological role, involved in a high affinity multicomponent binding-protein-dependent transport system for glycine betaine, carnitine and choline; probably responsible for the translocation of the substrate across the membrane. The chain is Glycine betaine/carnitine/choline transport system permease protein OpuCB (opuCB) from Bacillus subtilis (strain 168).